Reading from the N-terminus, the 203-residue chain is RNA annealing protein YRA2 (203 aa).

Position 1 is an N-acetylmethionine (Met-1). Disordered regions lie at residues 1 to 60 and 137 to 203; these read MDKA…REEP and QPQR…YMKG. The span at 11–20 shows a compositional bias: polar residues; the sequence is NSHTDSSSNH. Positions 47 to 60 are enriched in basic and acidic residues; it reads SRSKDRLYREREEP. The region spanning 64–138 is the RRM domain; it reads KRIRISKIPL…AKIEVEIYQP (75 aa). Over residues 139-153 the composition is skewed to basic residues; the sequence is QRKHSRMNAHNRRKQ. Residues 154–164 show a composition bias toward basic and acidic residues; the sequence is TAQEHGRDRPG. The segment covering 165-180 has biased composition (basic residues); sequence SHYRQKPNRVSKKNKG.

This sequence belongs to the YRA1 family. Associates with mRNPs. Interacts with YRA1.

Its subcellular location is the nucleus. Involved in export of poly(A) mRNAs from the nucleus. Recruited to the coding sequences as well as poly-A sites of active genes. This Saccharomyces cerevisiae (strain YJM789) (Baker's yeast) protein is RNA annealing protein YRA2 (YRA2).